Consider the following 518-residue polypeptide: Bifunctional purine biosynthesis protein PurH (518 aa).

The region spanning 1–146 (MSPIALLSVS…KNHQDVLVVT (146 aa)) is the MGS-like domain.

Belongs to the PurH family.

It catalyses the reaction (6R)-10-formyltetrahydrofolate + 5-amino-1-(5-phospho-beta-D-ribosyl)imidazole-4-carboxamide = 5-formamido-1-(5-phospho-D-ribosyl)imidazole-4-carboxamide + (6S)-5,6,7,8-tetrahydrofolate. It carries out the reaction IMP + H2O = 5-formamido-1-(5-phospho-D-ribosyl)imidazole-4-carboxamide. Its pathway is purine metabolism; IMP biosynthesis via de novo pathway; 5-formamido-1-(5-phospho-D-ribosyl)imidazole-4-carboxamide from 5-amino-1-(5-phospho-D-ribosyl)imidazole-4-carboxamide (10-formyl THF route): step 1/1. It participates in purine metabolism; IMP biosynthesis via de novo pathway; IMP from 5-formamido-1-(5-phospho-D-ribosyl)imidazole-4-carboxamide: step 1/1. The protein is Bifunctional purine biosynthesis protein PurH of Prochlorococcus marinus (strain NATL2A).